We begin with the raw amino-acid sequence, 272 residues long: MHAASREALERLEQTLDQGLNETSDKVGTGVNTGTELFDVVELLDSDRGLRVALIDPARDTNTRVELAKSLFGGKVSASTEEIVSAAVSQSWSNTRDLRDGLVKLGRLALLRAADAQGQQDRVEDELFQLARIIEREPELELKLADRAASPDARRDLLAKVLYGKVTSTTEALALQAIGRLRQRPVEELDSLVDEVAALEGRTVARVRAAAALGEQQKSTLSDKLEKIYGRKIAVHSEVDTSLLGGAVIRVGHEVIDGSTAGNLRRLRASIA.

It belongs to the ATPase delta chain family. As to quaternary structure, F-type ATPases have 2 components, F(1) - the catalytic core - and F(0) - the membrane proton channel. F(1) has five subunits: alpha(3), beta(3), gamma(1), delta(1), epsilon(1). F(0) has three main subunits: a(1), b(2) and c(10-14). The alpha and beta chains form an alternating ring which encloses part of the gamma chain. F(1) is attached to F(0) by a central stalk formed by the gamma and epsilon chains, while a peripheral stalk is formed by the delta and b chains.

The protein resides in the cell membrane. F(1)F(0) ATP synthase produces ATP from ADP in the presence of a proton or sodium gradient. F-type ATPases consist of two structural domains, F(1) containing the extramembraneous catalytic core and F(0) containing the membrane proton channel, linked together by a central stalk and a peripheral stalk. During catalysis, ATP synthesis in the catalytic domain of F(1) is coupled via a rotary mechanism of the central stalk subunits to proton translocation. Its function is as follows. This protein is part of the stalk that links CF(0) to CF(1). It either transmits conformational changes from CF(0) to CF(1) or is implicated in proton conduction. The polypeptide is ATP synthase subunit delta (Corynebacterium jeikeium (strain K411)).